A 101-amino-acid polypeptide reads, in one-letter code: Small ribosomal subunit protein uS10 (101 aa).

It belongs to the universal ribosomal protein uS10 family. Part of the 30S ribosomal subunit.

Its function is as follows. Involved in the binding of tRNA to the ribosomes. This Corynebacterium efficiens (strain DSM 44549 / YS-314 / AJ 12310 / JCM 11189 / NBRC 100395) protein is Small ribosomal subunit protein uS10.